We begin with the raw amino-acid sequence, 574 residues long: Sentrin-specific protease 3 (574 aa).

The tract at residues 1–125 (MKETIQGTGS…PTHRKTCSQR (125 aa)) is disordered. A phosphoserine mark is found at S54, S73, and S75. The segment covering 74 to 93 (ASEEEEEEEEEEDEDEEEEV) has biased composition (acidic residues). Positions 112-125 (RPSRPTHRKTCSQR) are enriched in basic residues. 2 short sequence motifs (nuclear localization signal) span residues 125–128 (RRRR) and 153–159 (RHRGRRR). The tract at residues 161–181 (LAHPKNHLSPQQGGATPQVPS) is disordered. S169 is modified (phosphoserine). T176 bears the Phosphothreonine mark. 4 positions are modified to phosphoserine: S181, S188, S212, and S232. The tract at residues 386 to 543 (HVLTMDDLGT…AFVLQYCKHL (158 aa)) is protease. Residues H465 and D482 contribute to the active site. C532 serves as the catalytic Nucleophile.

Belongs to the peptidase C48 family. In terms of assembly, component of some MLL1/MLL complex, at least composed of the core components KMT2A/MLL1, ASH2L, HCFC1/HCF1, WDR5 and RBBP5, as well as the facultative components BACC1, CHD8, E2F6, HSP70, INO80C, KANSL1, LAS1L, MAX, MCRS1, MGA, MYST1/MOF, PELP1, PHF20, PRP31, RING2, RUVB1/TIP49A, RUVB2/TIP49B, SENP3, TAF1, TAF4, TAF6, TAF7, TAF9 and TEX10. Interacts with EP300, NPM1 and CDCA8. Component of the 5FMC complex, at least composed of PELP1, LAS1L, TEX10, WDR18 and SENP3; the complex interacts with methylated CHTOP and ZNF148. Interacts with NOL9. Interacts with CCAR2.

The protein localises to the nucleus. The protein resides in the nucleolus. It is found in the nucleoplasm. It localises to the cytoplasm. On oxidative stress, SENP3 degradation is blocked by inhibition of its ubiquitination, which stabilizes it as it accumulates in the nucleoplasm. Functionally, protease that releases SUMO2 and SUMO3 monomers from sumoylated substrates, but has only weak activity against SUMO1 conjugates. Deconjugates SUMO2 from MEF2D, which increases its transcriptional activation capability. Deconjugates SUMO2 and SUMO3 from CDCA8. Redox sensor that, when redistributed into nucleoplasm, can act as an effector to enhance HIF1A transcriptional activity by desumoylating EP300. Required for rRNA processing through deconjugation of SUMO2 and SUMO3 from nucleophosmin, NPM1. Plays a role in the regulation of sumoylation status of ZNF148. Functions as a component of the Five Friends of Methylated CHTOP (5FMC) complex; the 5FMC complex is recruited to ZNF148 by methylated CHTOP, leading to desumoylation of ZNF148 and subsequent transactivation of ZNF148 target genes. Deconjugates SUMO2 from KAT5. Catalyzes desumoylation of MRE11. In Homo sapiens (Human), this protein is Sentrin-specific protease 3.